The following is a 163-amino-acid chain: Nucleotide-binding protein BA_1166 (163 aa).

This sequence belongs to the YajQ family.

Nucleotide-binding protein. This chain is Nucleotide-binding protein BA_1166, found in Bacillus anthracis.